The sequence spans 131 residues: L-ectoine synthase (131 aa).

The protein belongs to the ectoine synthase family.

The enzyme catalyses (2S)-4-acetamido-2-aminobutanoate = L-ectoine + H2O. Its pathway is amine and polyamine biosynthesis; ectoine biosynthesis; L-ectoine from L-aspartate 4-semialdehyde: step 3/3. In terms of biological role, catalyzes the circularization of gamma-N-acetyl-alpha,gamma-diaminobutyric acid (ADABA) to ectoine (1,4,5,6-tetrahydro-2-methyl-4-pyrimidine carboxylic acid), which is an excellent osmoprotectant. In Nocardia farcinica (strain IFM 10152), this protein is L-ectoine synthase.